The primary structure comprises 208 residues: MRLILLGPPGAGKGTQAQRLVHHHGIVQLSTGEMLRAAVAAGTPVGLKAKDVMASGGLVPDDVVIGIISDRLDQSDAKNGFILDGFPRTVPQAEALDRLLKSKNLKLDAVVELCVNESALLQRVESRVAEMTARGEQVRADDTPEVLSKRLASYRALTEPLIHYYSERGKLLTVDGMMPIEQVTRDIYRVLEEAIGASDVQSRGKGAG.

ATP is bound at residue 10 to 15; the sequence is GAGKGT. The segment at 30–59 is NMP; the sequence is STGEMLRAAVAAGTPVGLKAKDVMASGGLV. Residues T31, R36, 57–59, 85–88, and Q92 each bind AMP; these read GLV and GFPR. An LID region spans residues 126-142; that stretch reads SRVAEMTARGEQVRADD. Residue R127 participates in ATP binding. 2 residues coordinate AMP: R139 and R150. M178 contributes to the ATP binding site.

It belongs to the adenylate kinase family. Monomer.

Its subcellular location is the cytoplasm. It catalyses the reaction AMP + ATP = 2 ADP. The protein operates within purine metabolism; AMP biosynthesis via salvage pathway; AMP from ADP: step 1/1. Catalyzes the reversible transfer of the terminal phosphate group between ATP and AMP. Plays an important role in cellular energy homeostasis and in adenine nucleotide metabolism. The polypeptide is Adenylate kinase (Nitrobacter hamburgensis (strain DSM 10229 / NCIMB 13809 / X14)).